The primary structure comprises 95 residues: Aspartyl/glutamyl-tRNA(Asn/Gln) amidotransferase subunit C (95 aa).

This sequence belongs to the GatC family. As to quaternary structure, heterotrimer of A, B and C subunits.

The catalysed reaction is L-glutamyl-tRNA(Gln) + L-glutamine + ATP + H2O = L-glutaminyl-tRNA(Gln) + L-glutamate + ADP + phosphate + H(+). The enzyme catalyses L-aspartyl-tRNA(Asn) + L-glutamine + ATP + H2O = L-asparaginyl-tRNA(Asn) + L-glutamate + ADP + phosphate + 2 H(+). Its function is as follows. Allows the formation of correctly charged Asn-tRNA(Asn) or Gln-tRNA(Gln) through the transamidation of misacylated Asp-tRNA(Asn) or Glu-tRNA(Gln) in organisms which lack either or both of asparaginyl-tRNA or glutaminyl-tRNA synthetases. The reaction takes place in the presence of glutamine and ATP through an activated phospho-Asp-tRNA(Asn) or phospho-Glu-tRNA(Gln). The chain is Aspartyl/glutamyl-tRNA(Asn/Gln) amidotransferase subunit C from Chelativorans sp. (strain BNC1).